We begin with the raw amino-acid sequence, 273 residues long: Ribosomal RNA small subunit methyltransferase A (273 aa).

Positions 18, 20, 45, 66, 91, and 113 each coordinate S-adenosyl-L-methionine.

Belongs to the class I-like SAM-binding methyltransferase superfamily. rRNA adenine N(6)-methyltransferase family. RsmA subfamily.

The protein localises to the cytoplasm. It catalyses the reaction adenosine(1518)/adenosine(1519) in 16S rRNA + 4 S-adenosyl-L-methionine = N(6)-dimethyladenosine(1518)/N(6)-dimethyladenosine(1519) in 16S rRNA + 4 S-adenosyl-L-homocysteine + 4 H(+). Functionally, specifically dimethylates two adjacent adenosines (A1518 and A1519) in the loop of a conserved hairpin near the 3'-end of 16S rRNA in the 30S particle. May play a critical role in biogenesis of 30S subunits. The polypeptide is Ribosomal RNA small subunit methyltransferase A (Erwinia tasmaniensis (strain DSM 17950 / CFBP 7177 / CIP 109463 / NCPPB 4357 / Et1/99)).